A 120-amino-acid polypeptide reads, in one-letter code: uncharacterized protein (120 aa).

The chain crosses the membrane as a helical span at residues 63–83 (IDMSCVICFNFSCHLFVVIFI).

Its subcellular location is the membrane. This is an uncharacterized protein from Saccharomyces cerevisiae (strain ATCC 204508 / S288c) (Baker's yeast).